The sequence spans 515 residues: Pisatin demethylase (515 aa).

Residue Cys-453 coordinates heme.

The protein belongs to the cytochrome P450 family. Heme serves as cofactor.

In terms of biological role, can detoxify the phytoalexin pisatin from garden pea. Pisatin is an antimicrobial compound produced by pea in response to infection by plant pathogens. The protein is Pisatin demethylase (PDAT9) of Fusarium vanettenii (Neocosmospora pisi).